The following is a 286-amino-acid chain: 5'-3' exonuclease (286 aa).

Positions 172–270 (IKPKEFIDFL…IKLKDIILKK (99 aa)) constitute a 5'-3' exonuclease domain.

Its function is as follows. 5'-3' exonuclease acting preferentially on double-stranded DNA. The sequence is that of 5'-3' exonuclease from Buchnera aphidicola subsp. Acyrthosiphon pisum (strain APS) (Acyrthosiphon pisum symbiotic bacterium).